The sequence spans 247 residues: DNA polymerase sliding clamp (247 aa).

This sequence belongs to the PCNA family. Homotrimer. The subunits circularize to form a toroid; DNA passes through its center. Replication factor C (RFC) is required to load the toroid on the DNA.

Sliding clamp subunit that acts as a moving platform for DNA processing. Responsible for tethering the catalytic subunit of DNA polymerase and other proteins to DNA during high-speed replication. The sequence is that of DNA polymerase sliding clamp from Methanocorpusculum labreanum (strain ATCC 43576 / DSM 4855 / Z).